Here is a 529-residue protein sequence, read N- to C-terminus: uncharacterized protein (529 aa).

Catalysis depends on Asp-389, which acts as the Nucleophile. Residue Glu-392 is part of the active site. Catalysis depends on Asp-459, which acts as the Proton donor.

The protein belongs to the glycosyl hydrolase 31 family.

This is an uncharacterized protein from Pseudescherichia vulneris (Escherichia vulneris).